Reading from the N-terminus, the 168-residue chain is Large ribosomal subunit protein uL10 (168 aa).

Belongs to the universal ribosomal protein uL10 family. In terms of assembly, part of the ribosomal stalk of the 50S ribosomal subunit. The N-terminus interacts with L11 and the large rRNA to form the base of the stalk. The C-terminus forms an elongated spine to which L12 dimers bind in a sequential fashion forming a multimeric L10(L12)X complex.

Its function is as follows. Forms part of the ribosomal stalk, playing a central role in the interaction of the ribosome with GTP-bound translation factors. The protein is Large ribosomal subunit protein uL10 of Clostridioides difficile (strain 630) (Peptoclostridium difficile).